The chain runs to 204 residues: MTITIDAVILAGGMARRMGGNDKGLVELESQPMIKHAIDRINPQVKEILINANRNQKVYSEFGFEVISDQDSGYLGPLAGMITAMSHTQADYLMVVPCDCPLLPRDLVNRMLAQLTTADAELAVASDGKREQPVVMLLKPSLRASMKAFLDAGERKIDFWYAKHNYIVTDFSDQPNAFINVNTPEQKQQLSEAIANEKNNLRCK.

Residues 10–12, Lys23, Asn51, Asp69, and Asp99 contribute to the GTP site; that span reads LAG. Asp99 lines the Mg(2+) pocket.

This sequence belongs to the MobA family. Monomer. The cofactor is Mg(2+).

The protein localises to the cytoplasm. The enzyme catalyses Mo-molybdopterin + GTP + H(+) = Mo-molybdopterin guanine dinucleotide + diphosphate. Functionally, transfers a GMP moiety from GTP to Mo-molybdopterin (Mo-MPT) cofactor (Moco or molybdenum cofactor) to form Mo-molybdopterin guanine dinucleotide (Mo-MGD) cofactor. The chain is Molybdenum cofactor guanylyltransferase from Shewanella piezotolerans (strain WP3 / JCM 13877).